The chain runs to 392 residues: Succinate--CoA ligase [ADP-forming] subunit beta (392 aa).

The ATP-grasp domain occupies lysine 9–lysine 248. Residues lysine 50, glycine 57–glycine 59, valine 106, and glutamate 111 each bind ATP. Mg(2+)-binding residues include asparagine 203 and aspartate 217. Substrate is bound by residues asparagine 268 and glycine 325–valine 327.

The protein belongs to the succinate/malate CoA ligase beta subunit family. In terms of assembly, heterotetramer of two alpha and two beta subunits. The cofactor is Mg(2+).

It catalyses the reaction succinate + ATP + CoA = succinyl-CoA + ADP + phosphate. It carries out the reaction GTP + succinate + CoA = succinyl-CoA + GDP + phosphate. Its pathway is carbohydrate metabolism; tricarboxylic acid cycle; succinate from succinyl-CoA (ligase route): step 1/1. Its function is as follows. Succinyl-CoA synthetase functions in the citric acid cycle (TCA), coupling the hydrolysis of succinyl-CoA to the synthesis of either ATP or GTP and thus represents the only step of substrate-level phosphorylation in the TCA. The beta subunit provides nucleotide specificity of the enzyme and binds the substrate succinate, while the binding sites for coenzyme A and phosphate are found in the alpha subunit. The chain is Succinate--CoA ligase [ADP-forming] subunit beta from Salinibacter ruber (strain DSM 13855 / M31).